We begin with the raw amino-acid sequence, 264 residues long: Glutamate racemase (264 aa).

Residues 10 to 11 (DS) and 42 to 43 (YG) each bind substrate. The active-site Proton donor/acceptor is the Cys-73. A substrate-binding site is contributed by 74–75 (NT). Cys-183 functions as the Proton donor/acceptor in the catalytic mechanism. 184-185 (TH) contacts substrate.

The protein belongs to the aspartate/glutamate racemases family.

It catalyses the reaction L-glutamate = D-glutamate. It participates in cell wall biogenesis; peptidoglycan biosynthesis. Its function is as follows. Provides the (R)-glutamate required for cell wall biosynthesis. The sequence is that of Glutamate racemase from Streptococcus pyogenes serotype M3 (strain ATCC BAA-595 / MGAS315).